The sequence spans 635 residues: Cell pattern formation-associated protein stuA (635 aa).

Disordered stretches follow at residues 1-21 and 63-82; these read MNQTQPYMDVHSSHLSSAQPY and SGVASSQTAPPPPSTSMSSQ. In terms of domain architecture, HTH APSES-type spans 129–235; sequence RVTATLWEDE…HNIGGLLYHP (107 aa). The segment at residues 163 to 184 is a DNA-binding region (H-T-H motif); sequence GTKLLNVAGMTRGRRDGILKSE. Disordered regions lie at residues 246 to 480 and 498 to 635; these read QESQ…ASRS and SQLT…PRRR. Low complexity-rich tracts occupy residues 276–294 and 312–325; these read MQTSIPSQMPQPPTMSSQP and SASSLMGLSNQSSS. Residues 326–355 are compositionally biased toward polar residues; that stretch reads YDWNNQGMNSGVPNTQPLSIDTTLSNTRSM. The span at 356–380 shows a compositional bias: low complexity; that stretch reads PTTPATTPPGNNLQGMQSYQSQSGY. Residues 460–469 show a composition bias toward basic and acidic residues; sequence APEHESEYVQ. 2 stretches are compositionally biased toward polar residues: residues 498 to 513 and 539 to 571; these read SQLTNDITGSPQQNGS and AASSLYNIVSDTRGSSNGAGSENYTVASNTAPT. The nuclear localization domain stretch occupies residues 582 to 605; sequence KRGREDDDMGRPDSQGDYESKRRR. The segment covering 583 to 592 has biased composition (basic and acidic residues); that stretch reads RGREDDDMGR.

This sequence belongs to the EFG1/PHD1/stuA family.

Functionally, transcription factor that regulates asexual reproduction. Binds the StuA-response elements (StRE) with the consensus sequence 5'-(A/T)CGCG(T/A)N(A/C)-3' at the promoters of target genes. Controls the expression of 6 secondary metabolite biosynthetic clusters including 2 involved in the synthesis of alkaloids (fumigaclavine and fumitremorgen), 2 clusters of the ETP class (gliotoxin and an unknown ETP-like toxin), a cluster predicted to produce pseurotin A, and the product of the last cluster is unknown. Controls the production of ergot alkaloids during conidiophore development. Controls expression of sspA and gliP. Involved in the induction of immunoglobulin E-independent mast cell degranulation. The chain is Cell pattern formation-associated protein stuA from Aspergillus fumigatus (strain ATCC MYA-4609 / CBS 101355 / FGSC A1100 / Af293) (Neosartorya fumigata).